Reading from the N-terminus, the 636-residue chain is MSSIAQKNRNYFLYIFYGRIFNSSDKTFFIIKKQLVIAPNFFSVDQKLICSSELFCGTACSRSLVVLYENYKKIVILNSPQFFAGLDSGRENQSPDGSVQGNGLKWMLFLCQKSKRTIFSNHSNLFQCPSVAIVLVLALVILGVLAAIPLTLMLTSSAQKMSTDSTDLTDYSIRHPKFWPKTDKIHFDDLGGIPMSSMFPPNVSTCSGFGFACTGAVHMVIPSSKRCDGFKDCQDGSDEENCKECQSVFSCRSHIEEDSKKKRKTKVQPTLICLTAERLCNGVQDCLDGSDEAMCKSTCSKDQFKCNGSNACLPLSAKCDGVKDCSDGSDENNCNKCQKGAHVSLVSRNIKHLFASHVCDGVAQCADRSDEQQCDCKTCSGSDKALCDDGTCIKRSQVCDGKKDCSDGMDEENCPGTCSIEAFATKVKRVTCSDGKDYTESEACSGVEESCGGSCSKCHPKLTFTCPAAGNAQKKCIKRSKVCDGIFDCDDGADEKNCTPVKECGIDNASQFTCDRKCVDASRRCDGVWDCEDKSDEQNCSQCASGSIKCSADKKCLPAYTRCNGVAECSDGSDELKCSCEECLGAHSNTYMCSESNRCLKRDEVCSPYSMCPNATYTDKAYCAALVLKNSGRFPY.

The Cytoplasmic portion of the chain corresponds to 1–130 (MSSIAQKNRN…NHSNLFQCPS (130 aa)). A helical; Signal-anchor for type II membrane protein membrane pass occupies residues 131–151 (VAIVLVLALVILGVLAAIPLT). Topologically, residues 152–636 (LMLTSSAQKM…VLKNSGRFPY (485 aa)) are extracellular. N-linked (GlcNAc...) asparagine glycosylation occurs at N202. LDL-receptor class A domains lie at 205-243 (TCSGFGFACTGAVHMVIPSSKRCDGFKDCQDGSDEENCK), 244-296 (ECQS…AMCK), 298-335 (TCSKDQFKCNGSNACLPLSAKCDGVKDCSDGSDENNCN), 336-375 (KCQKGAHVSLVSRNIKHLFASHVCDGVAQCADRSDEQQCD), 378-415 (TCSGSDKALCDDGTCIKRSQVCDGKKDCSDGMDEENCP), 457-499 (KCHP…KNCT), 503-541 (ECGIDNASQFTCDRKCVDASRRCDGVWDCEDKSDEQNCS), and 542-579 (QCASGSIKCSADKKCLPAYTRCNGVAECSDGSDELKCS). 22 cysteine pairs are disulfide-bonded: C213–C233, C227–C242, C245–C273, C251–C286, C280–C295, C299–C312, C306–C325, C319–C334, C337–C365, C359–C374, C379–C392, C387–C405, C399–C414, C458–C476, C466–C489, C483–C498, C504–C518, C514–C531, C525–C540, C543–C556, C550–C569, and C563–C578. An N-linked (GlcNAc...) asparagine glycan is attached at N508. A glycan (N-linked (GlcNAc...) asparagine) is linked at N614.

The protein localises to the cell membrane. Probable receptor which is required for the oocyte-to-zygote transition although its exact function is controversial. Seems to be required for fertilization probably by promoting the interaction or fusion between sperm and oocyte. Conversely, shown to be dispensable for fertilization but required for the formation of a continuous and cohesive eggshell chitin layer by maintaining a homogenous distribution of chitin synthase chs-1 at the unfertilized oocyte cell membrane. Appears to recruit or maintain together to the unfertilized oocyte cortex several proteins including chs-1, kinase mbk-2 and pseudophosphatases egg-3, and possibly egg-4 and egg-5. In Caenorhabditis briggsae, this protein is LDL receptor repeat-containing protein egg-1.